A 374-amino-acid polypeptide reads, in one-letter code: Queuine tRNA-ribosyltransferase (374 aa).

Aspartate 91 serves as the catalytic Proton acceptor. Substrate contacts are provided by residues 91–95, aspartate 145, glutamine 189, and glycine 216; that span reads DSGGY. The interval 247 to 253 is RNA binding; the sequence is GVGTVPD. Aspartate 266 functions as the Nucleophile in the catalytic mechanism. Positions 271 to 275 are RNA binding; important for wobble base 34 recognition; the sequence is TRNAR. 4 residues coordinate Zn(2+): cysteine 304, cysteine 306, cysteine 309, and histidine 335.

The protein belongs to the queuine tRNA-ribosyltransferase family. In terms of assembly, homodimer. Within each dimer, one monomer is responsible for RNA recognition and catalysis, while the other monomer binds to the replacement base PreQ1. Zn(2+) serves as cofactor.

The enzyme catalyses 7-aminomethyl-7-carbaguanine + guanosine(34) in tRNA = 7-aminomethyl-7-carbaguanosine(34) in tRNA + guanine. The protein operates within tRNA modification; tRNA-queuosine biosynthesis. Catalyzes the base-exchange of a guanine (G) residue with the queuine precursor 7-aminomethyl-7-deazaguanine (PreQ1) at position 34 (anticodon wobble position) in tRNAs with GU(N) anticodons (tRNA-Asp, -Asn, -His and -Tyr). Catalysis occurs through a double-displacement mechanism. The nucleophile active site attacks the C1' of nucleotide 34 to detach the guanine base from the RNA, forming a covalent enzyme-RNA intermediate. The proton acceptor active site deprotonates the incoming PreQ1, allowing a nucleophilic attack on the C1' of the ribose to form the product. After dissociation, two additional enzymatic reactions on the tRNA convert PreQ1 to queuine (Q), resulting in the hypermodified nucleoside queuosine (7-(((4,5-cis-dihydroxy-2-cyclopenten-1-yl)amino)methyl)-7-deazaguanosine). This Leptospira interrogans serogroup Icterohaemorrhagiae serovar Lai (strain 56601) protein is Queuine tRNA-ribosyltransferase.